A 605-amino-acid polypeptide reads, in one-letter code: Probable potassium transport system protein Kup (605 aa).

12 helical membrane passes run 17 to 37, 45 to 65, 96 to 116, 140 to 160, 165 to 185, 211 to 231, 246 to 266, 286 to 306, 338 to 358, 367 to 387, 394 to 414, and 417 to 437; these read GLVFGDIGTSPIYTLTVIFAL, VFGILSMVVWTLIILVTVEYA, IAFVGFLSFVGVSLLLGDGVI, LGTLILIAALIAVVLFIFQFK, VAAAFGPLMVLWFGALTVSGL, GISAFFVLSEVILCATGGEAL, AWYFVFVALIINYLGQGAFAL, LYIPFLILTILATVIASQALI, IYIGSVNWFLMLLVIFIMLIF, AYGLAVTGTMTITGIMMTIIF, WKVPVAVAVTIVDVVFLISNL, and LPHGGYWSIILASVPFATILI.

The protein belongs to the HAK/KUP transporter (TC 2.A.72) family.

It is found in the cell inner membrane. The enzyme catalyses K(+)(in) + H(+)(in) = K(+)(out) + H(+)(out). In terms of biological role, transport of potassium into the cell. Likely operates as a K(+):H(+) symporter. The protein is Probable potassium transport system protein Kup of Geotalea uraniireducens (strain Rf4) (Geobacter uraniireducens).